A 357-amino-acid chain; its full sequence is Sorbitol dehydrogenase 2 (357 aa).

Cys43 provides a ligand contact to Zn(2+). Tyr49 is a substrate binding site. Residues His68 and Glu69 each coordinate Zn(2+). Glu154 is a substrate binding site. NAD(+) is bound by residues Asp202, Lys207, Val275–Met277, and Cys299–Arg301. Positions 301 and 302 each coordinate substrate.

The protein belongs to the zinc-containing alcohol dehydrogenase family. As to quaternary structure, homotetramer. Zn(2+) is required as a cofactor.

The catalysed reaction is keto-D-fructose + NADH + H(+) = D-sorbitol + NAD(+). The enzyme catalyses xylitol + NAD(+) = D-xylulose + NADH + H(+). In terms of biological role, polyol dehydrogenase that catalyzes the reversible NAD(+)-dependent oxidation of various sugar alcohols. Is active with D-sorbitol (D-glucitol) and xylitol as substrates, leading to the C2-oxidized product D-fructose and D-xylulose, respectively. The polypeptide is Sorbitol dehydrogenase 2 (SOR2) (Saccharomyces cerevisiae (strain ATCC 204508 / S288c) (Baker's yeast)).